A 173-amino-acid chain; its full sequence is Probable chemoreceptor glutamine deamidase CheD 2 (173 aa).

It belongs to the CheD family.

The enzyme catalyses L-glutaminyl-[protein] + H2O = L-glutamyl-[protein] + NH4(+). In terms of biological role, probably deamidates glutamine residues to glutamate on methyl-accepting chemotaxis receptors (MCPs), playing an important role in chemotaxis. The protein is Probable chemoreceptor glutamine deamidase CheD 2 of Albidiferax ferrireducens (strain ATCC BAA-621 / DSM 15236 / T118) (Rhodoferax ferrireducens).